The sequence spans 2920 residues: Cadherin-related hmr-1 (2920 aa).

The signal sequence occupies residues methionine 1–alanine 19. Residues lysine 20–proline 2779 lie on the Extracellular side of the membrane. Residues asparagine 72, asparagine 243, asparagine 253, asparagine 339, and asparagine 508 are each glycosylated (N-linked (GlcNAc...) asparagine). Cadherin domains follow at residues serine 322 to phenylalanine 422, serine 425 to phenylalanine 530, alanine 531 to phenylalanine 642, threonine 643 to phenylalanine 747, proline 749 to phenylalanine 865, tyrosine 871 to phenylalanine 979, glutamate 980 to tryptophan 1093, proline 1097 to phenylalanine 1211, threonine 1212 to phenylalanine 1335, glutamate 1336 to phenylalanine 1436, glutamine 1438 to phenylalanine 1546, glutamate 1548 to phenylalanine 1661, glutamate 1662 to isoleucine 1772, and isoleucine 1772 to threonine 1874. N-linked (GlcNAc...) asparagine glycosylation is found at asparagine 658, asparagine 685, asparagine 715, and asparagine 826. Residue asparagine 1177 is glycosylated (N-linked (GlcNAc...) asparagine). Asparagine 1417 carries N-linked (GlcNAc...) asparagine glycosylation. Asparagine 1646 carries an N-linked (GlcNAc...) asparagine glycan. 3 N-linked (GlcNAc...) asparagine glycosylation sites follow: asparagine 1935, asparagine 2224, and asparagine 2232. Residues alanine 2246–glutamine 2283 enclose the EGF-like 1 domain. 3 cysteine pairs are disulfide-bonded: cysteine 2250-cysteine 2261, cysteine 2255-cysteine 2270, and cysteine 2272-cysteine 2282. In terms of domain architecture, Laminin G-like spans glycine 2284–cysteine 2478. Residues asparagine 2307 and asparagine 2332 are each glycosylated (N-linked (GlcNAc...) asparagine). Intrachain disulfides connect cysteine 2452-cysteine 2478, cysteine 2501-cysteine 2515, and cysteine 2517-cysteine 2526. Residues serine 2492 to glutamate 2527 enclose the EGF-like 2 domain. Asparagine 2623 carries N-linked (GlcNAc...) asparagine glycosylation. The chain crosses the membrane as a helical span at residues alanine 2780 to valine 2800. Over tyrosine 2801–glutamine 2920 the chain is Cytoplasmic. Residue serine 2839 is modified to Phosphoserine. A disordered region spans residues isoleucine 2858 to asparagine 2891. The span at proline 2873–glutamate 2887 shows a compositional bias: basic and acidic residues. Serine 2909 bears the Phosphoserine mark. Threonine 2912 bears the Phosphothreonine mark. 2 positions are modified to phosphoserine: serine 2915 and serine 2918.

As to quaternary structure, monomer in solution. Isoform a is a component of a core catenin-cadherin complex consisting of hmr-1, hmp-1 and hmp-2; the complex localizes to adherens junctions. Isoform a interacts with hmp-2; the interaction is direct. Isoform a interacts (via intracellular domain) with jac-1. In terms of processing, phosphorylation at T-2912 increases the binding affinity for hmp-2. Sumoylated. Sumoylation prevents accumulation at adherens junctions and decreases the binding affinity for hmp-2. In terms of tissue distribution, expressed in epidermal cells (at protein level). As to expression, neuron-specific.

The protein localises to the cell membrane. It is found in the cell junction. Its subcellular location is the adherens junction. The protein resides in the cell projection. It localises to the dendrite. Functionally, cadherins are calcium-dependent cell adhesion proteins. They preferentially interact with themselves in a homophilic manner in connecting cells; cadherins may thus contribute to the sorting of heterogeneous cell types. Required for adherens junction assembly and connecting adherens junctions to the cytoskeleton. In terms of biological role, isoform a is required for cell migration during body enclosure and cell shape changes during body elongation. Required for proper localization of other junctional components, such as hmp-1, hmp-2, jac-1 and pac-1. Recruitment of pac-1 is required to establish cell polarity, independent of its role in cell adhesion. Required for primodial germ cell ingression and adherence to endodermal cells during gastrulation. Its function is as follows. Isoform b is involved in axonal guidance in a subset of motor neurons. This Caenorhabditis elegans protein is Cadherin-related hmr-1.